The sequence spans 401 residues: L-threonine ammonia-lyase (401 aa).

Lysine 51 carries the N6-(pyridoxal phosphate)lysine modification. Residues asparagine 78, 178-181, and serine 301 each bind pyridoxal 5'-phosphate; that span reads GGGL. One can recognise an ACT domain in the interval 326–401; that stretch reads FIETFVMDRP…AKGYEVRIVG (76 aa).

The protein belongs to the serine/threonine dehydratase family. As to quaternary structure, homotetramer. Pyridoxal 5'-phosphate serves as cofactor.

It catalyses the reaction L-threonine = 2-oxobutanoate + NH4(+). The catalysed reaction is L-serine = pyruvate + NH4(+). The protein operates within amino-acid biosynthesis; L-isoleucine biosynthesis; 2-oxobutanoate from L-threonine: step 1/1. Its activity is regulated as follows. Activity is insensitive to allosteric regulators L-valine and L-isoleucine at low concentrations, while these L-amino acids are inhibitors at high concentrations. Is insensitive to ammonium chloride and AMP. Inhibited in the presence of aminoxyacetic acid (AOAA), an inhibitor of pyridoxal phosphate-dependent enzymes. Functionally, catalyzes the conversion of L-threonine to 2-oxobutanoate and ammonia. Can also use L-serine, but the catalytic efficiency toward L-threonine is about sixfold higher than that toward L-serine. Also shows weak activity toward L-allo-threonine, but cannot use the corresponding D-amino acids. Does not exhibit racemase activity toward various amino acids, including serine. Physiologically, is likely involved in the threonine-dependent pathway of isoleucine biosynthesis. In Thermotoga maritima (strain ATCC 43589 / DSM 3109 / JCM 10099 / NBRC 100826 / MSB8), this protein is L-threonine ammonia-lyase.